The sequence spans 90 residues: Spore coat protein F-like protein YgzC (90 aa).

It belongs to the CotF family.

It localises to the spore coat. The polypeptide is Spore coat protein F-like protein YgzC (ygzC) (Bacillus subtilis (strain 168)).